Here is a 1232-residue protein sequence, read N- to C-terminus: Anoctamin-8 (1232 aa).

Residues 1–32 are disordered; that stretch reads MAEAASGAGGTSLEGERGKRPPPEGEPAAPAS. A2 is subject to N-acetylalanine. The Extracellular segment spans residues 2 to 244; sequence AEAASGAGGT…DDICDYFGVK (243 aa). Over residues 14–23 the composition is skewed to basic and acidic residues; sequence EGERGKRPPP. The helical transmembrane segment at 245 to 265 threads the bilayer; it reads IAMYFAWLGFYTSAMVYPAVF. Residues 266-281 lie on the Cytoplasmic side of the membrane; that stretch reads GSVLYTFTEADQTSRD. Residues 282-302 traverse the membrane as a helical segment; sequence VSCVVFALFNVIWSTLFLEEW. The Extracellular portion of the chain corresponds to 303–356; that stretch reads KRRGAELAYKWGTLDSPGEAVEEPRPQFRGVRRISPITRAEEFYYPPWKRLLFQ. At S318 the chain carries Phosphoserine. The chain crosses the membrane as a helical span at residues 357-377; sequence LLVSLPLCLACLVCVFLLMLG. The Cytoplasmic segment spans residues 378–400; sequence CFQLQELVLSVKGLPRLARFLPK. A helical membrane pass occupies residues 401–421; sequence VMLALLVSVSAEGYKKLAIWL. The Extracellular segment spans residues 422–437; sequence NDMENYRLESAYEKHL. A helical transmembrane segment spans residues 438–458; the sequence is IIKVVLFQFVNSYLSLFYIGF. Topologically, residues 459 to 750 are cytoplasmic; that stretch reads YLKDMERLKE…YEDTFQDYQE (292 aa). Residues 524–650 form a disordered region; the sequence is RRLEPQADEG…SPTMVEKGLE (127 aa). A compositionally biased stretch (gly residues) spans 532–551; it reads EGGGGGSGGGGRRCLSGGCG. Residues 582 to 606 show a composition bias toward acidic residues; it reads EEDEDDEEEEDEEEEEDEEEGEEGG. Position 669 is a phosphoserine (S669). Residues 681-728 form a disordered region; sequence RAGGEGRDQGPDGGPDPEPGSNSDSTRRQRRQNRSSWIDPPEEEHSPQ. Residues 751–771 traverse the membrane as a helical segment; it reads MFVQFGYVVLFSSAFPLAALC. Residues 772–807 lie on the Extracellular side of the membrane; that stretch reads ALVNNLIEIRSDAFKLCTGLQRPFGQRVESIGQWQK. A Phosphoserine; by FAM20C modification is found at S801. Residues 808-828 form a helical membrane-spanning segment; sequence VMEAMGVLAIVVNCYLIGQCG. Residues 829 to 841 are Cytoplasmic-facing; that stretch reads QLQRLFPWLSPEA. The helical transmembrane segment at 842–862 threads the bilayer; sequence AIVSVVVLEHFALLLKYLIHV. At 863 to 1232 the chain is on the extracellular side; it reads AIPDIPGWVA…QAVCWPSGWH (370 aa). 3 disordered regions span residues 888–970, 997–1152, and 1174–1232; these read RHER…GSLL, LAAA…WQWD, and PPCA…SGWH. Residues 904–932 are compositionally biased toward basic and acidic residues; sequence RREEEERQRHAEHHARREHDSGGREEARA. Low complexity-rich tracts occupy residues 933 to 953 and 997 to 1006; these read EGSGLDPATSSEKASAKAKGS and LAAAGAGATT. The residue at position 1020 (R1020) is an Asymmetric dimethylarginine; alternate. Omega-N-methylarginine; alternate is present on R1020. Residues 1031–1043 are compositionally biased toward basic and acidic residues; that stretch reads KSPETRRDSERSH. Residues 1078–1087 show a composition bias toward polar residues; that stretch reads TPSSGSSRVQ. 2 stretches are compositionally biased toward pro residues: residues 1130 to 1145 and 1197 to 1221; these read PAPPPPMPLPRPPTPP and LPPPPLPPTSDPLETPAPSPSPSPS.

It belongs to the anoctamin family. As to expression, expressed in embryonic stem cells, fetal brain and neural tissues.

Its subcellular location is the cell membrane. In terms of biological role, does not exhibit calcium-activated chloride channel (CaCC) activity. This Homo sapiens (Human) protein is Anoctamin-8 (ANO8).